Reading from the N-terminus, the 84-residue chain is U8-theraphotoxin-Hhn1c 2 (84 aa).

The first 21 residues, 1–21 (MKVVLLVCLVWMMAMMELVSC), serve as a signal peptide directing secretion. 5 disulfide bridges follow: Cys23-Cys35, Cys29-Cys44, Cys34-Cys67, Cys54-Cys75, and Cys69-Cys81.

Belongs to the AVIT (prokineticin) family. Expressed by the venom gland.

Its subcellular location is the secreted. The protein is U8-theraphotoxin-Hhn1c 2 of Cyriopagopus hainanus (Chinese bird spider).